The primary structure comprises 700 residues: Calpain-2 catalytic subunit (700 aa).

The residue at position 2 (Ala-2) is an N-acetylalanine. A propeptide spans 2–19 (AGIAAKLVKDREAAEGLG) (anchors to the small subunit). Positions 45 to 344 (LFQDPSFPAI…YSRLEICNLT (300 aa)) constitute a Calpain catalytic domain. Ca(2+)-binding residues include Ile-89, Gly-91, and Asp-96. Residue Cys-105 is part of the active site. Glu-175, Gln-229, and Lys-230 together coordinate Ca(2+). Residues His-262 and Asn-286 contribute to the active site. Ca(2+)-binding residues include Glu-292, Asp-299, and Glu-323. A domain III region spans residues 345–514 (PDTLTSDTYK…KKADYQAVDD (170 aa)). Residues 515-529 (EIEANLEEFDISEDD) are linker. The tract at residues 530–700 (IDDGFRRLFA…LISWLCFSVL (171 aa)) is domain IV. Ca(2+) contacts are provided by Ala-542, Asp-545, Glu-547, Glu-552, Asp-585, Asp-587, Ser-589, Lys-591, Glu-596, Asp-615, Asp-617, Ser-619, Thr-621, Glu-626, Asp-658, and Asn-661. EF-hand domains lie at 572–605 (FSIE…TKIQ) and 602–637 (TKIQ…AGFK). An EF-hand 3 domain is found at 667 to 700 (VRLETLFKIFKQLDPENTGTIELDLISWLCFSVL).

This sequence belongs to the peptidase C2 family. In terms of assembly, forms a heterodimer with a small (regulatory) subunit (CAPNS1). Interacts with CPEB3; this leads to cleavage of CPEB3. Requires Ca(2+) as cofactor.

It is found in the cytoplasm. It localises to the cell membrane. The catalysed reaction is Broad endopeptidase specificity.. Its activity is regulated as follows. Activated by 200-1000 micromolar concentrations of calcium and inhibited by calpastatin. Its function is as follows. Calcium-regulated non-lysosomal thiol-protease which catalyzes limited proteolysis of substrates involved in cytoskeletal remodeling and signal transduction. Proteolytically cleaves MYOC at 'Arg-226'. Proteolytically cleaves CPEB3 following neuronal stimulation which abolishes CPEB3 translational repressor activity, leading to translation of CPEB3 target mRNAs. The protein is Calpain-2 catalytic subunit (CAPN2) of Macaca fascicularis (Crab-eating macaque).